We begin with the raw amino-acid sequence, 137 residues long: Large ribosomal subunit protein eL28 (137 aa).

The residue at position 2 (S2) is an N-acetylserine. Glycyl lysine isopeptide (Lys-Gly) (interchain with G-Cter in SUMO2) cross-links involve residues K58 and K65. S115 is subject to Phosphoserine.

The protein belongs to the eukaryotic ribosomal protein eL28 family. Component of the large ribosomal subunit.

It is found in the cytoplasm. Functionally, component of the large ribosomal subunit. The ribosome is a large ribonucleoprotein complex responsible for the synthesis of proteins in the cell. The chain is Large ribosomal subunit protein eL28 (Rpl28) from Mus musculus (Mouse).